We begin with the raw amino-acid sequence, 310 residues long: Putative S-adenosyl-L-methionine-dependent methyltransferase MAP_2076c (310 aa).

S-adenosyl-L-methionine-binding positions include Asp131 and Asp160–Leu161.

Belongs to the UPF0677 family.

Exhibits S-adenosyl-L-methionine-dependent methyltransferase activity. This Mycolicibacterium paratuberculosis (strain ATCC BAA-968 / K-10) (Mycobacterium paratuberculosis) protein is Putative S-adenosyl-L-methionine-dependent methyltransferase MAP_2076c.